We begin with the raw amino-acid sequence, 92 residues long: Small ribosomal subunit protein uS19 (92 aa).

The protein belongs to the universal ribosomal protein uS19 family.

Its function is as follows. Protein S19 forms a complex with S13 that binds strongly to the 16S ribosomal RNA. The chain is Small ribosomal subunit protein uS19 from Crocosphaera subtropica (strain ATCC 51142 / BH68) (Cyanothece sp. (strain ATCC 51142)).